The chain runs to 426 residues: MSKTIIEFKNVSKTYADTDTTVLKDISFELEEGKFYTLLGASGSGKSTILNIIAGLLDATDGDVILDDKRINDLPANKRNVHTIFQSYALFPNMNVFDNVAFALKIKGVDKKEIAKRVSESLKLVRLDGFEKRSITKLSGGQKQRVAIARAIIDRPKVLLLDESLSALDMKLRKDMQYELRELQQSLGITFIFVTHDQEEALAMSDWVFIMNEGEIVQSGTPTDIYDEPINHFVADFIGESNILNGKMIEDYLVEFNGQKFEAVDGGMRKNEPIEVVIRPEDIWFTLPNEGKFNVKVDTQLFRGVHYEIVAYDEFNNEWIIHSTHKAIVGETVGLDFDPEAIHIMRLNESEEEFDARIEEYVEEEETVGLAKAVEEENAEEEAAIQEAVKEALENTMELTELAETVNEILQKQENETENSESGDHK.

Residues 6-238 (IEFKNVSKTY…PINHFVADFI (233 aa)) enclose the ABC transporter domain. 40 to 47 (GASGSGKS) is a binding site for ATP.

This sequence belongs to the ABC transporter superfamily. Spermidine/putrescine importer (TC 3.A.1.11.1) family. As to quaternary structure, the complex is composed of two ATP-binding proteins (PotA), two transmembrane proteins (PotB and PotC) and a solute-binding protein (PotD).

Its subcellular location is the cell membrane. The enzyme catalyses ATP + H2O + polyamine-[polyamine-binding protein]Side 1 = ADP + phosphate + polyamineSide 2 + [polyamine-binding protein]Side 1.. Its function is as follows. Part of the ABC transporter complex PotABCD involved in spermidine/putrescine import. Responsible for energy coupling to the transport system. The sequence is that of Spermidine/putrescine import ATP-binding protein PotA from Lactococcus lactis subsp. cremoris (strain SK11).